The chain runs to 211 residues: Adenylate kinase (211 aa).

10–15 (GAGKGT) lines the ATP pocket. The tract at residues 30 to 59 (STGGILRAAIQKQTALGKKVQKVVEVGGLV) is NMP. Residues threonine 31, arginine 36, 57–59 (GLV), 85–88 (GFPR), and glutamine 92 each bind AMP. An LID region spans residues 121 to 158 (GRRVCSACGSSYHVLFAQPKREGVCDRCRGVLVVREDD). Arginine 122 is a binding site for ATP. Cysteine 125 and cysteine 128 together coordinate Zn(2+). 131-132 (SY) lines the ATP pocket. Residues cysteine 145 and cysteine 148 each coordinate Zn(2+). Residues arginine 155 and arginine 166 each contribute to the AMP site. Proline 194 is an ATP binding site.

It belongs to the adenylate kinase family. In terms of assembly, monomer.

It localises to the cytoplasm. It carries out the reaction AMP + ATP = 2 ADP. It functions in the pathway purine metabolism; AMP biosynthesis via salvage pathway; AMP from ADP: step 1/1. In terms of biological role, catalyzes the reversible transfer of the terminal phosphate group between ATP and AMP. Plays an important role in cellular energy homeostasis and in adenine nucleotide metabolism. This chain is Adenylate kinase, found in Treponema pallidum (strain Nichols).